A 132-amino-acid chain; its full sequence is Small ribosomal subunit protein uS8 (132 aa).

Belongs to the universal ribosomal protein uS8 family. In terms of assembly, part of the 30S ribosomal subunit. Contacts proteins S5 and S12.

One of the primary rRNA binding proteins, it binds directly to 16S rRNA central domain where it helps coordinate assembly of the platform of the 30S subunit. The protein is Small ribosomal subunit protein uS8 of Rhizobium rhizogenes (strain K84 / ATCC BAA-868) (Agrobacterium radiobacter).